The primary structure comprises 296 residues: Enoyl-CoA hydratase domain-containing protein 2, mitochondrial (296 aa).

The N-terminal 17 residues, 1–17 (MLRVLPRALRLPCSWRF), are a transit peptide targeting the mitochondrion. Lys-101 is modified (N6-acetyllysine; alternate). Lys-101 is modified (N6-succinyllysine; alternate).

Belongs to the enoyl-CoA hydratase/isomerase family.

It is found in the mitochondrion. The chain is Enoyl-CoA hydratase domain-containing protein 2, mitochondrial (Echdc2) from Mus musculus (Mouse).